Reading from the N-terminus, the 131-residue chain is SPbeta prophage-derived uncharacterized protein YosD (131 aa).

A disordered region spans residues 102–131; sequence EHNNKKAKNNDTQNQRQIKTSWWQRLTKKD. The span at 111–125 shows a compositional bias: polar residues; the sequence is NDTQNQRQIKTSWWQ.

This Bacillus subtilis (strain 168) protein is SPbeta prophage-derived uncharacterized protein YosD (yosD).